Here is a 292-residue protein sequence, read N- to C-terminus: Probable endonuclease 4 (292 aa).

Residues His-69, His-109, Glu-145, Asp-179, His-182, His-216, Asp-229, His-231, and Glu-261 each coordinate Zn(2+).

Belongs to the AP endonuclease 2 family. Zn(2+) serves as cofactor.

The catalysed reaction is Endonucleolytic cleavage to 5'-phosphooligonucleotide end-products.. Functionally, endonuclease IV plays a role in DNA repair. It cleaves phosphodiester bonds at apurinic or apyrimidinic (AP) sites, generating a 3'-hydroxyl group and a 5'-terminal sugar phosphate. This Desulfotalea psychrophila (strain LSv54 / DSM 12343) protein is Probable endonuclease 4.